We begin with the raw amino-acid sequence, 223 residues long: Deoxyribose-phosphate aldolase (223 aa).

The Proton donor/acceptor role is filled by aspartate 92. Catalysis depends on lysine 158, which acts as the Schiff-base intermediate with acetaldehyde. Lysine 188 functions as the Proton donor/acceptor in the catalytic mechanism.

This sequence belongs to the DeoC/FbaB aldolase family. DeoC type 1 subfamily.

It is found in the cytoplasm. The catalysed reaction is 2-deoxy-D-ribose 5-phosphate = D-glyceraldehyde 3-phosphate + acetaldehyde. It functions in the pathway carbohydrate degradation; 2-deoxy-D-ribose 1-phosphate degradation; D-glyceraldehyde 3-phosphate and acetaldehyde from 2-deoxy-alpha-D-ribose 1-phosphate: step 2/2. Catalyzes a reversible aldol reaction between acetaldehyde and D-glyceraldehyde 3-phosphate to generate 2-deoxy-D-ribose 5-phosphate. This is Deoxyribose-phosphate aldolase from Mycolicibacterium paratuberculosis (strain ATCC BAA-968 / K-10) (Mycobacterium paratuberculosis).